We begin with the raw amino-acid sequence, 566 residues long: Hemocyanin B chain (566 aa).

Cys-82 and Cys-87 are joined by a disulfide. Cu cation contacts are provided by His-183, His-187, His-213, His-309, His-313, and His-347.

It belongs to the tyrosinase family. Hemocyanin subfamily. In terms of tissue distribution, hemolymph.

Its subcellular location is the secreted. The protein resides in the extracellular space. In terms of biological role, hemocyanins are copper-containing oxygen carriers occurring freely dissolved in the hemolymph of many mollusks and arthropods. This chain is Hemocyanin B chain, found in Astacus leptodactylus (Turkish narrow-clawed crayfish).